A 509-amino-acid chain; its full sequence is Scavenger receptor class B member 1 (509 aa).

At 1–11 the chain is on the cytoplasmic side; that stretch reads MGSRSRARQVA. The chain crosses the membrane as a helical span at residues 12–32; the sequence is AALGFVGLLLAALGAVMIVMV. The Extracellular portion of the chain corresponds to 33 to 439; the sequence is PSIIKQQVLK…FYTQLVLMPK (407 aa). N-linked (GlcNAc...) asparagine glycans are attached at residues Asn-102, Asn-108, Asn-173, Asn-212, Asn-255, Asn-310, Asn-330, and Asn-383. Cys-251 and Cys-384 are oxidised to a cystine. A helical membrane pass occupies residues 440–460; it reads VLHYAQYVLLALGCVLLFIPI. Topologically, residues 461–509 are cytoplasmic; sequence VYQIRSQEKCYLFWSSSKKGSKDKEAIQAYSESLMTPAPKGTVLQEARL.

It belongs to the CD36 family. In terms of assembly, the C-terminal region binds to PDZK1. Post-translationally, N-glycosylated. In terms of processing, the six cysteines of the extracellular domain are all involved in intramolecular disulfide bonds.

Its subcellular location is the cell membrane. It localises to the membrane. It is found in the caveola. Functionally, receptor for different ligands such as phospholipids, cholesterol ester, lipoproteins, phosphatidylserine and apoptotic cells. Receptor for HDL, mediating selective uptake of cholesteryl ether and HDL-dependent cholesterol efflux. Also facilitates the flux of free and esterified cholesterol between the cell surface and apoB-containing lipoproteins and modified lipoproteins, although less efficiently than HDL. May be involved in the phagocytosis of apoptotic cells, via its phosphatidylserine binding activity. The protein is Scavenger receptor class B member 1 (SCARB1) of Sus scrofa (Pig).